A 171-amino-acid polypeptide reads, in one-letter code: S-ribosylhomocysteine lyase (171 aa).

3 residues coordinate Fe cation: His-54, His-58, and Cys-128.

This sequence belongs to the LuxS family. As to quaternary structure, homodimer. Fe cation is required as a cofactor.

The enzyme catalyses S-(5-deoxy-D-ribos-5-yl)-L-homocysteine = (S)-4,5-dihydroxypentane-2,3-dione + L-homocysteine. Functionally, involved in the synthesis of autoinducer 2 (AI-2) which is secreted by bacteria and is used to communicate both the cell density and the metabolic potential of the environment. The regulation of gene expression in response to changes in cell density is called quorum sensing. Catalyzes the transformation of S-ribosylhomocysteine (RHC) to homocysteine (HC) and 4,5-dihydroxy-2,3-pentadione (DPD). This chain is S-ribosylhomocysteine lyase, found in Cronobacter sakazakii (strain ATCC BAA-894) (Enterobacter sakazakii).